The primary structure comprises 111 residues: Disintegrin acostatin-alpha (111 aa).

An N-terminal signal peptide occupies residues 1 to 20; that stretch reads MIQVLLVTLCLAVFPYQGSS. A propeptide spanning residues 21–46 is cleaved from the precursor; it reads IILESGNVNDYEVVYPRKVTALPKGA. Residues 47-111 enclose the Disintegrin domain; it reads IQPKNPCCDA…GDCPRKHFYA (65 aa). Pyrrolidone carboxylic acid; in Disintegrin acostatin-alpha, processed form is present on Gln-48. Disulfide bonds link Cys-53–Cys-76, Cys-67–Cys-73, Cys-72–Cys-97, and Cys-85–Cys-104. The Cell attachment site signature appears at 89-91; sequence RGD. Positions 110–111 are excised as a propeptide; the sequence is YA.

It belongs to the disintegrin family. Dimeric disintegrin subfamily. Heterodimer with subunit beta; disulfide-linked. Expressed by the venom gland.

The protein resides in the secreted. Inhibits fibrinogen interaction with platelets. Acts by binding to alpha-IIb/beta-3 (ITGA2B/ITGB3) on the platelet surface and inhibits ADP-induced platelet aggregation in human platelet-rich plasma. This Agkistrodon contortrix contortrix (Southern copperhead) protein is Disintegrin acostatin-alpha.